Here is a 190-residue protein sequence, read N- to C-terminus: Dynein axonemal light chain 1 (190 aa).

Alanine 2 carries the post-translational modification N-acetylalanine. LRR repeat units lie at residues asparagine 49–lysine 70, asparagine 71–glycine 92, threonine 94–lysine 115, and lysine 116–alanine 137. Serine 56 carries the post-translational modification Phosphoserine. One can recognise an LRRCT domain in the interval asparagine 150–asparagine 190.

It belongs to the dynein light chain LC1-type family. In terms of assembly, interacts with ZMYND10 (via C-terminus). Interacts with DNAH5, a outer arm dynein heavy chain. Interacts with tubulin located within the A-tubule of the outer doublets in a ATP-independent manner. In terms of tissue distribution, expressed in tissues carrying motile cilia such as respiratory epithelia, ependyma and testis.

It is found in the cytoplasm. The protein resides in the cytoskeleton. The protein localises to the cilium axoneme. In terms of biological role, part of the multisubunit axonemal ATPase complexes that generate the force for cilia motility and govern beat frequency. Component of the outer arm dynein (ODA). May be involved in a mechanosensory feedback mechanism controlling ODA activity based on external conformational cues by tethering the outer arm dynein heavy chain (DNAH5) to the microtubule within the axoneme. Important for ciliary function in the airways and for the function of the cilia that produce the nodal flow essential for the determination of the left-right asymmetry. This Homo sapiens (Human) protein is Dynein axonemal light chain 1.